Consider the following 431-residue polypeptide: Enolase (431 aa).

Gln-167 contacts (2R)-2-phosphoglycerate. Glu-209 functions as the Proton donor in the catalytic mechanism. Mg(2+)-binding residues include Asp-246, Glu-289, and Asp-316. Residues Lys-341, Arg-370, Ser-371, and Lys-392 each contribute to the (2R)-2-phosphoglycerate site. The active-site Proton acceptor is the Lys-341.

Belongs to the enolase family. In terms of assembly, component of the RNA degradosome, a multiprotein complex involved in RNA processing and mRNA degradation. Requires Mg(2+) as cofactor.

The protein resides in the cytoplasm. The protein localises to the secreted. It localises to the cell surface. It catalyses the reaction (2R)-2-phosphoglycerate = phosphoenolpyruvate + H2O. The protein operates within carbohydrate degradation; glycolysis; pyruvate from D-glyceraldehyde 3-phosphate: step 4/5. In terms of biological role, catalyzes the reversible conversion of 2-phosphoglycerate (2-PG) into phosphoenolpyruvate (PEP). It is essential for the degradation of carbohydrates via glycolysis. This is Enolase from Shewanella sp. (strain ANA-3).